The following is a 70-amino-acid chain: Fumarase D (70 aa).

The protein belongs to the FumD family.

The enzyme catalyses (S)-malate = fumarate + H2O. Its function is as follows. In vitro catalyzes the addition of water to fumarate, forming malate. Cannot catalyze the reverse reaction. Cannot use the cis-isomer maleate as substrate. The sequence is that of Fumarase D from Salmonella typhi.